The following is a 457-amino-acid chain: Siroheme synthase (457 aa).

The tract at residues Met1–Thr204 is precorrin-2 dehydrogenase /sirohydrochlorin ferrochelatase. NAD(+) contacts are provided by residues Asp22 to Val23 and Leu43 to Ala44. Ser128 is modified (phosphoserine). The segment at Gly216–His457 is uroporphyrinogen-III C-methyltransferase. Pro225 is a binding site for S-adenosyl-L-methionine. Catalysis depends on Asp248, which acts as the Proton acceptor. Lys270 acts as the Proton donor in catalysis. Residues Gly301–Asp303, Ile306, Thr331–Ala332, Met382, and Gly411 contribute to the S-adenosyl-L-methionine site.

This sequence in the N-terminal section; belongs to the precorrin-2 dehydrogenase / sirohydrochlorin ferrochelatase family. The protein in the C-terminal section; belongs to the precorrin methyltransferase family.

The enzyme catalyses uroporphyrinogen III + 2 S-adenosyl-L-methionine = precorrin-2 + 2 S-adenosyl-L-homocysteine + H(+). The catalysed reaction is precorrin-2 + NAD(+) = sirohydrochlorin + NADH + 2 H(+). It catalyses the reaction siroheme + 2 H(+) = sirohydrochlorin + Fe(2+). The protein operates within cofactor biosynthesis; adenosylcobalamin biosynthesis; precorrin-2 from uroporphyrinogen III: step 1/1. Its pathway is cofactor biosynthesis; adenosylcobalamin biosynthesis; sirohydrochlorin from precorrin-2: step 1/1. It participates in porphyrin-containing compound metabolism; siroheme biosynthesis; precorrin-2 from uroporphyrinogen III: step 1/1. It functions in the pathway porphyrin-containing compound metabolism; siroheme biosynthesis; siroheme from sirohydrochlorin: step 1/1. The protein operates within porphyrin-containing compound metabolism; siroheme biosynthesis; sirohydrochlorin from precorrin-2: step 1/1. In terms of biological role, multifunctional enzyme that catalyzes the SAM-dependent methylations of uroporphyrinogen III at position C-2 and C-7 to form precorrin-2 via precorrin-1. Then it catalyzes the NAD-dependent ring dehydrogenation of precorrin-2 to yield sirohydrochlorin. Finally, it catalyzes the ferrochelation of sirohydrochlorin to yield siroheme. This chain is Siroheme synthase, found in Shigella flexneri.